Consider the following 430-residue polypeptide: Enolase (430 aa).

Residue Q163 coordinates (2R)-2-phosphoglycerate. Catalysis depends on E205, which acts as the Proton donor. Residues D242, E285, and D312 each contribute to the Mg(2+) site. (2R)-2-phosphoglycerate is bound by residues K337, R366, S367, and K388. K337 (proton acceptor) is an active-site residue.

Belongs to the enolase family. It depends on Mg(2+) as a cofactor.

The protein localises to the cytoplasm. It is found in the secreted. It localises to the cell surface. The catalysed reaction is (2R)-2-phosphoglycerate = phosphoenolpyruvate + H2O. The protein operates within carbohydrate degradation; glycolysis; pyruvate from D-glyceraldehyde 3-phosphate: step 4/5. Functionally, catalyzes the reversible conversion of 2-phosphoglycerate (2-PG) into phosphoenolpyruvate (PEP). It is essential for the degradation of carbohydrates via glycolysis. The polypeptide is Enolase (Rhodopseudomonas palustris (strain BisB18)).